The primary structure comprises 474 residues: Aspartyl/glutamyl-tRNA(Asn/Gln) amidotransferase subunit B (474 aa).

The protein belongs to the GatB/GatE family. GatB subfamily. In terms of assembly, heterotrimer of A, B and C subunits.

It catalyses the reaction L-glutamyl-tRNA(Gln) + L-glutamine + ATP + H2O = L-glutaminyl-tRNA(Gln) + L-glutamate + ADP + phosphate + H(+). The catalysed reaction is L-aspartyl-tRNA(Asn) + L-glutamine + ATP + H2O = L-asparaginyl-tRNA(Asn) + L-glutamate + ADP + phosphate + 2 H(+). Its function is as follows. Allows the formation of correctly charged Asn-tRNA(Asn) or Gln-tRNA(Gln) through the transamidation of misacylated Asp-tRNA(Asn) or Glu-tRNA(Gln) in organisms which lack either or both of asparaginyl-tRNA or glutaminyl-tRNA synthetases. The reaction takes place in the presence of glutamine and ATP through an activated phospho-Asp-tRNA(Asn) or phospho-Glu-tRNA(Gln). The protein is Aspartyl/glutamyl-tRNA(Asn/Gln) amidotransferase subunit B of Coprothermobacter proteolyticus (strain ATCC 35245 / DSM 5265 / OCM 4 / BT).